Here is a 170-residue protein sequence, read N- to C-terminus: Large ribosomal subunit protein uL11 (170 aa).

It belongs to the universal ribosomal protein uL11 family. In terms of assembly, part of the ribosomal stalk of the 50S ribosomal subunit. Interacts with L10 and the large rRNA to form the base of the stalk. L10 forms an elongated spine to which L12 dimers bind in a sequential fashion forming a multimeric L10(L12)X complex.

Forms part of the ribosomal stalk which helps the ribosome interact with GTP-bound translation factors. The polypeptide is Large ribosomal subunit protein uL11 (Desulfurococcus amylolyticus (strain DSM 18924 / JCM 16383 / VKM B-2413 / 1221n) (Desulfurococcus kamchatkensis)).